A 512-amino-acid polypeptide reads, in one-letter code: tRNA-2-methylthio-N(6)-dimethylallyladenosine synthase (512 aa).

Residues Arg23 to His139 enclose the MTTase N-terminal domain. [4Fe-4S] cluster is bound by residues Cys32, Cys68, Cys102, Cys176, Cys180, and Cys183. One can recognise a Radical SAM core domain in the interval Arg162–Glu398. One can recognise a TRAM domain in the interval Arg401–Ile469. A disordered region spans residues Ala477 to Cys512.

Belongs to the methylthiotransferase family. MiaB subfamily. In terms of assembly, monomer. [4Fe-4S] cluster serves as cofactor.

It is found in the cytoplasm. It catalyses the reaction N(6)-dimethylallyladenosine(37) in tRNA + (sulfur carrier)-SH + AH2 + 2 S-adenosyl-L-methionine = 2-methylsulfanyl-N(6)-dimethylallyladenosine(37) in tRNA + (sulfur carrier)-H + 5'-deoxyadenosine + L-methionine + A + S-adenosyl-L-homocysteine + 2 H(+). Catalyzes the methylthiolation of N6-(dimethylallyl)adenosine (i(6)A), leading to the formation of 2-methylthio-N6-(dimethylallyl)adenosine (ms(2)i(6)A) at position 37 in tRNAs that read codons beginning with uridine. The chain is tRNA-2-methylthio-N(6)-dimethylallyladenosine synthase from Mycolicibacterium smegmatis (strain ATCC 700084 / mc(2)155) (Mycobacterium smegmatis).